Reading from the N-terminus, the 120-residue chain is NAD(P)H-quinone oxidoreductase subunit 3 (120 aa).

Transmembrane regions (helical) follow at residues 6 to 26, 64 to 84, and 89 to 109; these read GYDAFLGFLLIAAAVPVLALV, MFALVFVIFDVETVFLYPWAV, and LGLLAFIEALIFIAILLVALA.

It belongs to the complex I subunit 3 family. NDH-1 can be composed of about 15 different subunits; different subcomplexes with different compositions have been identified which probably have different functions.

The protein localises to the cellular thylakoid membrane. The enzyme catalyses a plastoquinone + NADH + (n+1) H(+)(in) = a plastoquinol + NAD(+) + n H(+)(out). It carries out the reaction a plastoquinone + NADPH + (n+1) H(+)(in) = a plastoquinol + NADP(+) + n H(+)(out). In terms of biological role, NDH-1 shuttles electrons from an unknown electron donor, via FMN and iron-sulfur (Fe-S) centers, to quinones in the respiratory and/or the photosynthetic chain. The immediate electron acceptor for the enzyme in this species is believed to be plastoquinone. Couples the redox reaction to proton translocation, and thus conserves the redox energy in a proton gradient. Cyanobacterial NDH-1 also plays a role in inorganic carbon-concentration. This is NAD(P)H-quinone oxidoreductase subunit 3 from Synechococcus sp. (strain CC9605).